Reading from the N-terminus, the 119-residue chain is Large ribosomal subunit protein uL18 (119 aa).

The protein belongs to the universal ribosomal protein uL18 family. Part of the 50S ribosomal subunit; part of the 5S rRNA/L5/L18/L25 subcomplex. Contacts the 5S and 23S rRNAs.

This is one of the proteins that bind and probably mediate the attachment of the 5S RNA into the large ribosomal subunit, where it forms part of the central protuberance. The sequence is that of Large ribosomal subunit protein uL18 from Clostridium botulinum (strain ATCC 19397 / Type A).